A 608-amino-acid polypeptide reads, in one-letter code: Pentatricopeptide repeat-containing protein 1, apicoplast (608 aa).

PPR repeat units lie at residues 165–199, 200–230, 236–270, 336–370, 372–402, 410–445, and 446–480; these read TTLAFNAAMSAVEKKGCLSTMLDLIGTMKSKNIKP, DLVSYKLVLSLCDKYHLVDTAEILFEEMIES, NYEIYAIMISCYAKTGNGYKAIELFEKLRNDPFVE, QYSEYANVIYACNISNLYEQGIKYFEELLKSGKYM, SIFVFENIFDLLSKNGDYEKSLEYYNNLKND, NVNILNNLLKALSIHNKINVAEDIWNNEFDELLLTP, and NNLSYQILLKIYSHIDNYEKAFKLFKEMQVNKLLN.

The protein belongs to the PPR family. P subfamily. Homodimer.

It is found in the plastid. Its subcellular location is the apicoplast. Its function is as follows. Binds to apicoplast RNA transcripts, preferentially to the motif UUAU, and protects RNA transcripts from degradation by ribonuclease. This chain is Pentatricopeptide repeat-containing protein 1, apicoplast, found in Plasmodium falciparum (isolate 3D7).